A 413-amino-acid chain; its full sequence is Transcription factor bHLH23 (413 aa).

The tract at residues 40-75 (SSQTQTPSCDPPLILRGSGSGDGEGNGPLPQPPPPL) is disordered. T186 is subject to Phosphothreonine. Position 191 is a phosphoserine (S191). Disordered stretches follow at residues 232–278 (TEPV…RSRA) and 391–413 (ETEQ…KMFS). The segment covering 246-257 (TDERKRKTREET) has biased composition (basic and acidic residues). A bHLH domain is found at 277-326 (RAAIMHKLSERRRRQKINEMMKALQELLPRCTKTDRSSMLDDVIEYVKSL).

In terms of assembly, homodimer. As to expression, expressed constitutively in leaves, stems, and flowers.

The protein resides in the nucleus. The sequence is that of Transcription factor bHLH23 (BHLH23) from Arabidopsis thaliana (Mouse-ear cress).